Here is a 449-residue protein sequence, read N- to C-terminus: Adenylosuccinate synthetase (449 aa).

GTP is bound by residues 12-18 (GDEGKGK) and 40-42 (GHT). Asp13 (proton acceptor) is an active-site residue. Residues Asp13 and Gly40 each coordinate Mg(2+). Residues 13–16 (DEGK), 38–41 (NAGH), Thr128, Arg142, Gln223, Thr238, and Arg302 each bind IMP. The Proton donor role is filled by His41. Residue 298-304 (TTTGRRR) coordinates substrate. Residues Arg304, 330 to 332 (KLD), and 412 to 414 (SLG) each bind GTP.

It belongs to the adenylosuccinate synthetase family. As to quaternary structure, homodimer. Requires Mg(2+) as cofactor.

Its subcellular location is the cytoplasm. The enzyme catalyses IMP + L-aspartate + GTP = N(6)-(1,2-dicarboxyethyl)-AMP + GDP + phosphate + 2 H(+). It participates in purine metabolism; AMP biosynthesis via de novo pathway; AMP from IMP: step 1/2. Its function is as follows. Plays an important role in the de novo pathway of purine nucleotide biosynthesis. Catalyzes the first committed step in the biosynthesis of AMP from IMP. This is Adenylosuccinate synthetase from Gloeothece citriformis (strain PCC 7424) (Cyanothece sp. (strain PCC 7424)).